Here is a 447-residue protein sequence, read N- to C-terminus: Signal recognition particle 54 kDa protein (447 aa).

Residues 103-110, 185-189, and 245-248 contribute to the GTP site; these read GVQGSGKT, DTAGR, and TKMD.

Belongs to the GTP-binding SRP family. SRP54 subfamily. In terms of assembly, part of the signal recognition particle protein translocation system, which is composed of SRP and FtsY. Archaeal SRP consists of a 7S RNA molecule of 300 nucleotides and two protein subunits: SRP54 and SRP19.

It is found in the cytoplasm. It carries out the reaction GTP + H2O = GDP + phosphate + H(+). Functionally, involved in targeting and insertion of nascent membrane proteins into the cytoplasmic membrane. Binds to the hydrophobic signal sequence of the ribosome-nascent chain (RNC) as it emerges from the ribosomes. The SRP-RNC complex is then targeted to the cytoplasmic membrane where it interacts with the SRP receptor FtsY. The protein is Signal recognition particle 54 kDa protein of Saccharolobus islandicus (strain M.16.27) (Sulfolobus islandicus).